The primary structure comprises 540 residues: RNA exonuclease 3 (540 aa).

Residues 7–34 (QFKHIVCPFLRTGRKCQSRNCFFSHDFQ) form a C3H1-type zinc finger. An Exonuclease domain is found at 382–529 (HCALDCELCY…EDAVSALQLV (148 aa)).

This sequence belongs to the REXO1/REXO3 family.

It localises to the cytoplasm. The protein resides in the nucleus. Its function is as follows. 3' to 5' exoribonuclease required for proper 3' end maturation of MRP RNA and of the U5L snRNA. This is RNA exonuclease 3 (rex3) from Schizosaccharomyces pombe (strain 972 / ATCC 24843) (Fission yeast).